Consider the following 837-residue polypeptide: E3 ubiquitin-protein ligase bre-1 (837 aa).

Positions 1-33 (MMKRSNEGIGGENYASSPSDDGQQKRRKIQFEP) are disordered. Residues 1–313 (MMKRSNEGIG…AKEIENLRLE (313 aa)) are interaction with ubc-1. Coiled coils occupy residues 54 to 89 (TSKLKQQLLYKNKRIAELEKENERSKRRQQTDESNF) and 185 to 253 (HKEL…KHMR). Positions 269-302 (GQSGGNGGATPSSSGTTNATEKKISAPDIPPSET) are disordered. Polar residues predominate over residues 277–287 (ATPSSSGTTNA). 3 coiled-coil regions span residues 300–397 (SETA…AFRS), 458–651 (DEMK…KAQT), and 677–763 (VQFK…NESV). An RING-type zinc finger spans residues 785–824 (CPSCKTRPKDCIMLKCYHLFCETCIKTMYDTRQRKCPKCN).

It belongs to the BRE1 family. As to quaternary structure, interacts with ubc-1. Interacts with mrg-1. As to expression, in adult animals, expressed in oocytes, germ cells, pharyngeal and intestinal cells.

It is found in the nucleus. It catalyses the reaction S-ubiquitinyl-[E2 ubiquitin-conjugating enzyme]-L-cysteine + [acceptor protein]-L-lysine = [E2 ubiquitin-conjugating enzyme]-L-cysteine + N(6)-ubiquitinyl-[acceptor protein]-L-lysine.. It participates in protein modification; protein ubiquitination. In terms of biological role, E3 ubiquitin-protein ligase that mediates monoubiquitination of 'Lys-117' of histone H2B. H2B 'Lys-117' ubiquitination gives a specific tag for epigenetic transcriptional activation and is also prerequisite for histone H3 'Lys-4' and 'Lys-79' methylation. Involved in regulating stem cell proliferative fate. This chain is E3 ubiquitin-protein ligase bre-1 (rfp-1), found in Caenorhabditis elegans.